Reading from the N-terminus, the 1186-residue chain is Trafficking protein particle complex II-specific subunit 120 homolog (1186 aa).

Disordered stretches follow at residues proline 777 to serine 824 and threonine 964 to asparagine 984. Polar residues predominate over residues aspartate 779–glycine 792. Serine 971 carries the phosphoserine modification. Positions proline 972–serine 981 are enriched in low complexity.

The protein belongs to the TRS120 family. In terms of assembly, part of the multisubunit TRAPP (transport protein particle) II complex composed of BET3, BET5, TRS20, TRS23, TRS31, TRS33, TRS65, TRS85, TRS120 and TRS130. In terms of tissue distribution, expressed in roots, leaves, stems and flowers.

The protein localises to the golgi apparatus. The protein resides in the trans-Golgi network. It localises to the early endosome. In terms of biological role, specific subunit of the TRAPP II complex, a highly conserved vesicle tethering complex that is required for the proper transport of proteins in post-Golgi trafficking pathways to the growing cell plate in mitotic active cells. Required for the polarized and selective transport of PIN2 and probably PIN1 to the plasma membrane. Not required for ER-to-Golgi as well as biosynthetic and endocytic vacuolar transport. The sequence is that of Trafficking protein particle complex II-specific subunit 120 homolog from Arabidopsis thaliana (Mouse-ear cress).